The sequence spans 400 residues: Serine/threonine transporter SstT (400 aa).

The next 9 helical transmembrane spans lie at 14–34, 48–68, 76–96, 136–156, 177–197, 211–231, 285–305, 311–331, and 349–371; these read IIIA…VTPY, SVAP…FQVG, VLLL…IASL, AISE…GLAM, IIHK…AVTF, LLAV…PILV, IPLG…VLTL, LGIH…TISA, and CSLF…IISV.

The protein belongs to the dicarboxylate/amino acid:cation symporter (DAACS) (TC 2.A.23) family.

It localises to the cell inner membrane. It carries out the reaction L-serine(in) + Na(+)(in) = L-serine(out) + Na(+)(out). The enzyme catalyses L-threonine(in) + Na(+)(in) = L-threonine(out) + Na(+)(out). Functionally, involved in the import of serine and threonine into the cell, with the concomitant import of sodium (symport system). This is Serine/threonine transporter SstT from Acinetobacter baumannii (strain ATCC 17978 / DSM 105126 / CIP 53.77 / LMG 1025 / NCDC KC755 / 5377).